The sequence spans 134 residues: Putative transposase InsN for insertion sequence element IS911A (134 aa).

This sequence belongs to the transposase 8 family.

Functionally, involved in the transposition of the insertion sequence IS911. In Escherichia coli (strain K12), this protein is Putative transposase InsN for insertion sequence element IS911A (insN1).